A 229-amino-acid chain; its full sequence is MSTWANLGLQDSASPLMEQLIFFHDHALLILVMITVLVGYLMVMLFFNSYVNRFLLHGQLIEMIWTILPAIILLFIAMPSLRLLYLLDEINEPSITLKSIGHQWYWSYEYSDFNDIEFDSYMIPTNELSNDGFRLLDVDNRIVLPMNSQIRILVTAADVIHSWTIPALGVKVDGTPGRLNQTNFFINRPGLFYGQCSEICGANHSFMPIVIESVPVNYFIKWISDKVNS.

Topologically, residues 1–26 (MSTWANLGLQDSASPLMEQLIFFHDH) are mitochondrial intermembrane. The chain crosses the membrane as a helical span at residues 27–48 (ALLILVMITVLVGYLMVMLFFN). Residues 49–62 (SYVNRFLLHGQLIE) lie on the Mitochondrial matrix side of the membrane. Residues 63–82 (MIWTILPAIILLFIAMPSLR) form a helical membrane-spanning segment. Over 83 to 229 (LLYLLDEINE…IKWISDKVNS (147 aa)) the chain is Mitochondrial intermembrane. The Cu cation site is built by His-161, Cys-196, Glu-198, Cys-200, His-204, and Met-207. A Mg(2+)-binding site is contributed by Glu-198.

Belongs to the cytochrome c oxidase subunit 2 family. Component of the cytochrome c oxidase (complex IV, CIV), a multisubunit enzyme composed of a catalytic core of 3 subunits and several supernumerary subunits. The complex exists as a monomer or a dimer and forms supercomplexes (SCs) in the inner mitochondrial membrane with ubiquinol-cytochrome c oxidoreductase (cytochrome b-c1 complex, complex III, CIII). The cofactor is Cu cation.

Its subcellular location is the mitochondrion inner membrane. The enzyme catalyses 4 Fe(II)-[cytochrome c] + O2 + 8 H(+)(in) = 4 Fe(III)-[cytochrome c] + 2 H2O + 4 H(+)(out). Functionally, component of the cytochrome c oxidase, the last enzyme in the mitochondrial electron transport chain which drives oxidative phosphorylation. The respiratory chain contains 3 multisubunit complexes succinate dehydrogenase (complex II, CII), ubiquinol-cytochrome c oxidoreductase (cytochrome b-c1 complex, complex III, CIII) and cytochrome c oxidase (complex IV, CIV), that cooperate to transfer electrons derived from NADH and succinate to molecular oxygen, creating an electrochemical gradient over the inner membrane that drives transmembrane transport and the ATP synthase. Cytochrome c oxidase is the component of the respiratory chain that catalyzes the reduction of oxygen to water. Electrons originating from reduced cytochrome c in the intermembrane space (IMS) are transferred via the dinuclear copper A center (CU(A)) of subunit 2 and heme A of subunit 1 to the active site in subunit 1, a binuclear center (BNC) formed by heme A3 and copper B (CU(B)). The BNC reduces molecular oxygen to 2 water molecules using 4 electrons from cytochrome c in the IMS and 4 protons from the mitochondrial matrix. In Drosophila subobscura (Fruit fly), this protein is Cytochrome c oxidase subunit 2 (mt:CoII).